The following is a 315-amino-acid chain: Ribose-phosphate pyrophosphokinase (315 aa).

Residues 37–39 (DGE) and 96–97 (RQ) each bind ATP. The Mg(2+) site is built by His-131 and Asp-170. The active site involves Lys-194. Residues Arg-196, Asp-220, and 224–228 (DTGGT) each bind D-ribose 5-phosphate.

The protein belongs to the ribose-phosphate pyrophosphokinase family. Class I subfamily. Homohexamer. Mg(2+) is required as a cofactor.

It localises to the cytoplasm. It catalyses the reaction D-ribose 5-phosphate + ATP = 5-phospho-alpha-D-ribose 1-diphosphate + AMP + H(+). Its pathway is metabolic intermediate biosynthesis; 5-phospho-alpha-D-ribose 1-diphosphate biosynthesis; 5-phospho-alpha-D-ribose 1-diphosphate from D-ribose 5-phosphate (route I): step 1/1. Involved in the biosynthesis of the central metabolite phospho-alpha-D-ribosyl-1-pyrophosphate (PRPP) via the transfer of pyrophosphoryl group from ATP to 1-hydroxyl of ribose-5-phosphate (Rib-5-P). The protein is Ribose-phosphate pyrophosphokinase of Shewanella oneidensis (strain ATCC 700550 / JCM 31522 / CIP 106686 / LMG 19005 / NCIMB 14063 / MR-1).